The primary structure comprises 283 residues: Pantothenate synthetase (283 aa).

26–33 (MGNLHDGH) contacts ATP. Residue His33 is the Proton donor of the active site. Gln57 contacts (R)-pantoate. Residue Gln57 coordinates beta-alanine. 148-151 (GKKD) lines the ATP pocket. (R)-pantoate is bound at residue Gln154. ATP-binding positions include Ala177 and 185–188 (LSSR).

Belongs to the pantothenate synthetase family. As to quaternary structure, homodimer.

It is found in the cytoplasm. It catalyses the reaction (R)-pantoate + beta-alanine + ATP = (R)-pantothenate + AMP + diphosphate + H(+). Its pathway is cofactor biosynthesis; (R)-pantothenate biosynthesis; (R)-pantothenate from (R)-pantoate and beta-alanine: step 1/1. Its function is as follows. Catalyzes the condensation of pantoate with beta-alanine in an ATP-dependent reaction via a pantoyl-adenylate intermediate. The polypeptide is Pantothenate synthetase (Delftia acidovorans (strain DSM 14801 / SPH-1)).